The chain runs to 478 residues: Dynein regulatory complex subunit 4 (478 aa).

Positions 1–12 (MAPKKKGKKGKA) are enriched in basic residues. A disordered region spans residues 1 to 29 (MAPKKKGKKGKAKGTAIVDGVAPEDMTKE). Positions 1-114 (MAPKKKGKKG…LLYEHQNNLA (114 aa)) are regulates microtubule-binding. Coiled coils occupy residues 24-207 (EDMT…RKTE) and 242-426 (LNNL…ELAR). The microtubule-binding stretch occupies residues 115 to 258 (EVKAEGTVVM…NSLKEQMEDM (144 aa)). The interaction with SMO stretch occupies residues 357–478 (QQKTGFKNLL…GPAGLVGAPT (122 aa)).

Belongs to the DRC4 family. Component of the nexin-dynein regulatory complex (N-DRC). Interacts with microtubules. Interacts with SMO. Interacts (via coiled-coil domains) with RAB3B (in GTP-bound form). Interacts with DRC1. Interacts with DRC7. Highly expressed in adult testes and lung. Weakly or not expressed in other tested tissues.

Its subcellular location is the cytoplasm. It is found in the cytoskeleton. The protein localises to the cell projection. The protein resides in the cilium. It localises to the flagellum. Its subcellular location is the cilium axoneme. It is found in the cilium basal body. The protein localises to the golgi apparatus. The protein resides in the flagellum axoneme. In terms of biological role, component of the nexin-dynein regulatory complex (N-DRC), a key regulator of ciliary/flagellar motility which maintains the alignment and integrity of the distal axoneme and regulates microtubule sliding in motile axonemes. Plays an important role in the assembly of the N-DRC linker. Plays dual roles at both the primary (or non-motile) cilia to regulate hedgehog signaling and in motile cilia to coordinate cilia movement. Required for proper motile cilia functioning. Positively regulates ciliary smoothened (SMO)-dependent Hedgehog (Hh) signaling pathway by facilitating the trafficking of SMO into the cilium and the stimulation of SMO activity in a GRK2-dependent manner. May play a role in the spermatozoa motility. The chain is Dynein regulatory complex subunit 4 (Gas8) from Mus musculus (Mouse).